Reading from the N-terminus, the 200-residue chain is Nucleoside triphosphate pyrophosphatase (200 aa).

Residue Asp79 is the Proton acceptor of the active site.

This sequence belongs to the Maf family. The cofactor is a divalent metal cation.

The protein resides in the cytoplasm. It catalyses the reaction a ribonucleoside 5'-triphosphate + H2O = a ribonucleoside 5'-phosphate + diphosphate + H(+). It carries out the reaction a 2'-deoxyribonucleoside 5'-triphosphate + H2O = a 2'-deoxyribonucleoside 5'-phosphate + diphosphate + H(+). Its function is as follows. Nucleoside triphosphate pyrophosphatase. May have a dual role in cell division arrest and in preventing the incorporation of modified nucleotides into cellular nucleic acids. The polypeptide is Nucleoside triphosphate pyrophosphatase (Legionella pneumophila (strain Paris)).